The primary structure comprises 182 residues: Cell wall protein phiA (182 aa).

An N-terminal signal peptide occupies residues M1–A18. N-linked (GlcNAc...) asparagine glycosylation is found at N57 and N107.

Belongs to the phiA family. Mainly present in phialides and conidia.

The protein localises to the secreted. The protein resides in the cell wall. In terms of biological role, cell wall protein involved in development of asexual structures such as phialide and conidium development, and thus required for spore formation. Plays a role as a general stress protectant produced by the fungus in competition with antagonistic bacteria. In Emericella nidulans (strain FGSC A4 / ATCC 38163 / CBS 112.46 / NRRL 194 / M139) (Aspergillus nidulans), this protein is Cell wall protein phiA.